A 155-amino-acid chain; its full sequence is Ribosomal RNA large subunit methyltransferase H (155 aa).

S-adenosyl-L-methionine-binding positions include L73, G104, and L123–L128.

It belongs to the RNA methyltransferase RlmH family. Homodimer.

It is found in the cytoplasm. The enzyme catalyses pseudouridine(1915) in 23S rRNA + S-adenosyl-L-methionine = N(3)-methylpseudouridine(1915) in 23S rRNA + S-adenosyl-L-homocysteine + H(+). Its function is as follows. Specifically methylates the pseudouridine at position 1915 (m3Psi1915) in 23S rRNA. The chain is Ribosomal RNA large subunit methyltransferase H from Pseudomonas aeruginosa (strain UCBPP-PA14).